The primary structure comprises 67 residues: UPF0434 protein Bcep1808_2639 (67 aa).

The protein belongs to the UPF0434 family.

The sequence is that of UPF0434 protein Bcep1808_2639 from Burkholderia vietnamiensis (strain G4 / LMG 22486) (Burkholderia cepacia (strain R1808)).